An 88-amino-acid polypeptide reads, in one-letter code: Small ribosomal subunit protein uS15 (88 aa).

It belongs to the universal ribosomal protein uS15 family. In terms of assembly, part of the 30S ribosomal subunit. Forms a bridge to the 50S subunit in the 70S ribosome, contacting the 23S rRNA.

Its function is as follows. One of the primary rRNA binding proteins, it binds directly to 16S rRNA where it helps nucleate assembly of the platform of the 30S subunit by binding and bridging several RNA helices of the 16S rRNA. Functionally, forms an intersubunit bridge (bridge B4) with the 23S rRNA of the 50S subunit in the ribosome. The polypeptide is Small ribosomal subunit protein uS15 (Mycoplasma mycoides subsp. mycoides SC (strain CCUG 32753 / NCTC 10114 / PG1)).